A 120-amino-acid chain; its full sequence is uncharacterized protein (120 aa).

Positions 80–99 are disordered; it reads PTRKLQTPLNEPPRTWRKTA.

This is an uncharacterized protein from Goose circovirus (GoCV).